The following is a 225-amino-acid chain: Cytidylate kinase (225 aa).

An ATP-binding site is contributed by 11–19 (GPAGAGKST).

Belongs to the cytidylate kinase family. Type 1 subfamily.

It is found in the cytoplasm. It catalyses the reaction CMP + ATP = CDP + ADP. The catalysed reaction is dCMP + ATP = dCDP + ADP. In Shouchella clausii (strain KSM-K16) (Alkalihalobacillus clausii), this protein is Cytidylate kinase.